A 602-amino-acid chain; its full sequence is Elongation factor 4 (602 aa).

A tr-type G domain is found at 7–188; the sequence is ENIRNFSIIA…AIIDLVPPPK (182 aa). GTP is bound by residues 19–24 and 135–138; these read DHGKST and NKID.

The protein belongs to the TRAFAC class translation factor GTPase superfamily. Classic translation factor GTPase family. LepA subfamily.

The protein localises to the cell inner membrane. The enzyme catalyses GTP + H2O = GDP + phosphate + H(+). Its function is as follows. Required for accurate and efficient protein synthesis under certain stress conditions. May act as a fidelity factor of the translation reaction, by catalyzing a one-codon backward translocation of tRNAs on improperly translocated ribosomes. Back-translocation proceeds from a post-translocation (POST) complex to a pre-translocation (PRE) complex, thus giving elongation factor G a second chance to translocate the tRNAs correctly. Binds to ribosomes in a GTP-dependent manner. The protein is Elongation factor 4 of Chlamydia pneumoniae (Chlamydophila pneumoniae).